A 385-amino-acid polypeptide reads, in one-letter code: Putative nickel insertion protein (385 aa).

The protein belongs to the LarC family.

This chain is Putative nickel insertion protein, found in Geobacter sp. (strain M21).